A 519-amino-acid chain; its full sequence is Chloroethene reductive dehalogenase (519 aa).

The segment at residues 1–43 (MSKFHKTISRRDFMKGLGLAGAGIGAVAASAPVFHDIDELVSS) is a signal peptide (tat-type signal). 2 4Fe-4S ferredoxin-type domains span residues 388–420 (PTPP…QEDE) and 435–465 (LGYR…LENA). 8 residues coordinate [4Fe-4S] cluster: Cys-400, Cys-403, Cys-406, Cys-410, Cys-444, Cys-448, Cys-451, and Cys-455.

The protein belongs to the PceA family. It depends on [4Fe-4S] cluster as a cofactor. The cofactor is corrinoid. Post-translationally, predicted to be exported by the Tat system. The position of the signal peptide cleavage has been experimentally proven.

The protein resides in the cell membrane. The enzyme catalyses chloroethene + AH2 = ethene + chloride + A + H(+). It catalyses the reaction (Z)-1,2-dichloroethene + AH2 = chloroethene + chloride + A + H(+). The catalysed reaction is 1,1-dichloroethene + AH2 = chloroethene + chloride + A + H(+). Its function is as follows. Catalyzes the reductive dechlorination of chloroethene (or vinyl chloride, VC) to ethene. Can also reduce all dichloroethene (DCE) isomers, but not tetrachloroethene (PCE) or trichloroethene (TCE), at high rates. Reduced methyl viologen can act as the artificial electron donor. This Dehalococcoides mccartyi (strain VS) protein is Chloroethene reductive dehalogenase.